The following is a 440-amino-acid chain: Amino acid transporter AVT6D (440 aa).

Helical transmembrane passes span 26–46 (FAGA…MAIP), 47–67 (AAFK…IAWL), 102–122 (AVTV…SIII), 149–169 (WNTR…PLVL), 182–202 (ISFL…IIAL), 219–239 (GGLS…AFTF), 262–282 (ISVI…YLLF), 309–329 (IVRL…NFSL), 356–376 (FPLL…WYFF), 377–397 (QFLG…AIVL), and 410–430 (IVAS…ISTN).

Belongs to the amino acid/polyamine transporter 2 family. Amino acid/auxin permease (AAAP) (TC 2.A.18.6) subfamily.

It is found in the membrane. This chain is Amino acid transporter AVT6D, found in Arabidopsis thaliana (Mouse-ear cress).